The chain runs to 548 residues: Lipase 2 (548 aa).

The N-terminal stretch at 1–14 (MKLCLLALGAAVAA) is a signal peptide. A disulfide bond links cysteine 74 and cysteine 111. The active-site Acyl-ester intermediate is the serine 223. Cysteine 282 and cysteine 291 are disulfide-bonded. The Charge relay system role is filled by glutamate 355. Asparagine 365 carries N-linked (GlcNAc...) asparagine glycosylation. Histidine 463 acts as the Charge relay system in catalysis.

Belongs to the type-B carboxylesterase/lipase family.

It catalyses the reaction a triacylglycerol + H2O = a diacylglycerol + a fatty acid + H(+). The protein is Lipase 2 (LIP2) of Diutina rugosa (Yeast).